The chain runs to 147 residues: MRDNTIGSLIWLRLIRFTNQSNQMSNEFLKRFDLTTAQFDVLLQIRTYQPLTQMELAEKVTVTQGGISRMLTRLEKEGYIVRKQDWKTKTISLTEQGEAALERALPEQLAFQSSFFDDVLNEEEQKILYELMTKVHKHSEKKELPKE.

One can recognise an HTH marR-type domain in the interval 1 to 137 (MRDNTIGSLI…LYELMTKVHK (137 aa)). The H-T-H motif DNA-binding region spans 53 to 76 (QMELAEKVTVTQGGISRMLTRLEK).

This is an uncharacterized protein from Bacillus anthracis.